Reading from the N-terminus, the 366-residue chain is UPF0329 protein ECU01_0130/ECU01_1480/ECU08_0060 (366 aa).

Residues 325–366 (IRKEEKRIRKEEERAKNEEELLRMVESEEGKSGEGEEGCRRG) form a disordered region.

The protein belongs to the UPF0329 family.

This Encephalitozoon cuniculi (strain GB-M1) (Microsporidian parasite) protein is UPF0329 protein ECU01_0130/ECU01_1480/ECU08_0060.